Consider the following 311-residue polypeptide: Aspartate carbamoyltransferase catalytic subunit (311 aa).

Residues R55 and T56 each coordinate carbamoyl phosphate. K85 provides a ligand contact to L-aspartate. Carbamoyl phosphate is bound by residues R106, H135, and Q138. Residues R168 and R230 each coordinate L-aspartate. Positions 268 and 269 each coordinate carbamoyl phosphate.

It belongs to the aspartate/ornithine carbamoyltransferase superfamily. ATCase family. As to quaternary structure, heterododecamer (2C3:3R2) of six catalytic PyrB chains organized as two trimers (C3), and six regulatory PyrI chains organized as three dimers (R2).

It carries out the reaction carbamoyl phosphate + L-aspartate = N-carbamoyl-L-aspartate + phosphate + H(+). Its pathway is pyrimidine metabolism; UMP biosynthesis via de novo pathway; (S)-dihydroorotate from bicarbonate: step 2/3. In terms of biological role, catalyzes the condensation of carbamoyl phosphate and aspartate to form carbamoyl aspartate and inorganic phosphate, the committed step in the de novo pyrimidine nucleotide biosynthesis pathway. This is Aspartate carbamoyltransferase catalytic subunit from Escherichia coli (strain 55989 / EAEC).